The sequence spans 872 residues: Alanine--tRNA ligase (872 aa).

Zn(2+)-binding residues include His-567, His-571, Cys-669, and His-673.

The protein belongs to the class-II aminoacyl-tRNA synthetase family. Requires Zn(2+) as cofactor.

Its subcellular location is the cytoplasm. The catalysed reaction is tRNA(Ala) + L-alanine + ATP = L-alanyl-tRNA(Ala) + AMP + diphosphate. In terms of biological role, catalyzes the attachment of alanine to tRNA(Ala) in a two-step reaction: alanine is first activated by ATP to form Ala-AMP and then transferred to the acceptor end of tRNA(Ala). Also edits incorrectly charged Ser-tRNA(Ala) and Gly-tRNA(Ala) via its editing domain. The polypeptide is Alanine--tRNA ligase (Streptococcus thermophilus (strain ATCC BAA-491 / LMD-9)).